Here is a 345-residue protein sequence, read N- to C-terminus: Ninja-family protein AFP1 (345 aa).

Disordered stretches follow at residues 114 to 185 (TSLP…ATAN) and 201 to 256 (QVSG…RRLS). 2 stretches are compositionally biased toward basic and acidic residues: residues 123-132 (EWRKRKEMQT) and 222-232 (LETKASSDEAR). The span at 235–249 (PSTTQPQQETTTKPT) shows a compositional bias: low complexity.

Belongs to the Ninja family. Forms a heterodimer with AFP2. Interacts with ABI5/DPBF1, DPBF2, AREB3/DPBF3, ABF1, ABF3/DPBF5 and ABF4/AREB2.

Its subcellular location is the nucleus. Its function is as follows. Acts as a negative regulator of abscisic acid (ABA) response during germination through the ubiquitin-mediated proteolysis of ABI5/DPBF1. This chain is Ninja-family protein AFP1 (AFP1), found in Arabidopsis thaliana (Mouse-ear cress).